Reading from the N-terminus, the 276-residue chain is MLPEKVVKILEEMKNEKIRGASWMAKKGAEAFILLSEELDETSLEEGIIELKREILEINPSMASLYNLAMFIPITNDREVVKLRAEEFIKRAEEAKKEIASIGAQLIDSGDVIITHSYSSAVFEILKTAKRRGKQFKVILTESAPDYEGLYLAKALQDESIEVEIITDAQLGLFAKDATLAIVGADTVTKDGYVVNKAGTYLLAISCYESEVPFYVAAETYKFHQKITSKEVELVERPLYREGSRVRNVLFDITPWKFIRGIITELGIILPPRDMI.

This sequence belongs to the eIF-2B alpha/beta/delta subunits family. In terms of assembly, complex of two different subunits.

Functionally, catalyzes the exchange of initiation factor 2-bound GDP for GTP. In Pyrococcus furiosus (strain ATCC 43587 / DSM 3638 / JCM 8422 / Vc1), this protein is Putative translation initiation factor eIF-2B subunit 2-like.